Reading from the N-terminus, the 1441-residue chain is Protein clueless (1441 aa).

Disordered stretches follow at residues 1–79 and 106–131; these read MALD…EAAT and VAANDESESAEQQAAENAASSGELES. The segment covering 8–22 has biased composition (polar residues); sequence KNSSSAATGDANTVK. Residues 54-63 show a composition bias toward basic residues; that stretch reads AKKKGKKNRN. Low complexity-rich tracts occupy residues 64–79 and 106–126; these read KSPPIATDAETTEAAT and VAANDESESAEQQAAENAASS. S273 is modified (phosphoserine). The region spanning 427-669 is the Clu domain; that stretch reads RAEDAFSSKL…RTFPPDVNFL (243 aa). Residues 726-753 are compositionally biased toward basic and acidic residues; sequence KKQDEAKEGTKEPASETEKESPPKAITE. 2 disordered regions span residues 726–769 and 961–1009; these read KKQD…GETK and EIHK…SGGT. Residues 964-977 are compositionally biased toward basic residues; that stretch reads KKRTNTKYNKHKSS. Over residues 978 to 1009 the composition is skewed to low complexity; sequence KSSGSGSKQSGQTSNQNGTSTSPSSSTASGGT. TPR repeat units lie at residues 1109-1142, 1235-1268, and 1270-1303; these read AYNFYTTGQSKIQQGLFKEGYELISEALNLLNNV, ALIDSNISLILHALGEYELSLRFIEHALKLNLKY, and GAKAMHVAVSYHLMARTQSCMGDFRSALNNEKET.

Belongs to the CLU family.

It is found in the cytoplasm. MRNA-binding protein involved in proper cytoplasmic distribution of mitochondria. The protein is Protein clueless of Drosophila willistoni (Fruit fly).